Consider the following 416-residue polypeptide: Cyclin-dependent kinase 8 (416 aa).

The tract at residues 1 to 15 (MDYDFKVKLTGERER) is interaction with CCNC. A Protein kinase domain is found at 21–287 (EYEGCKVGRG…SEQAMQDPYF (267 aa)). Residues 27 to 35 (VGRGTYGHV) and K52 contribute to the ATP site. The active-site Proton acceptor is D151. The disordered stretch occupies residues 313–416 (EEEPDDKGDK…PQYSHQTHRY (104 aa)). The segment covering 325–343 (QQQQQGNNHTNGTGHPGNQ) has biased composition (low complexity). 2 stretches are compositionally biased toward polar residues: residues 361-378 (PTTT…QRSN) and 386-416 (PGPS…THRY).

Belongs to the protein kinase superfamily. CMGC Ser/Thr protein kinase family. CDC2/CDKX subfamily. In terms of assembly, component of the Mediator complex. Interacts with ccnc. Requires Mg(2+) as cofactor.

It is found in the nucleus. It catalyses the reaction L-seryl-[protein] + ATP = O-phospho-L-seryl-[protein] + ADP + H(+). The catalysed reaction is L-threonyl-[protein] + ATP = O-phospho-L-threonyl-[protein] + ADP + H(+). The enzyme catalyses [DNA-directed RNA polymerase] + ATP = phospho-[DNA-directed RNA polymerase] + ADP + H(+). Functionally, component of the Mediator complex, a coactivator involved in regulated gene transcription of nearly all RNA polymerase II-dependent genes. Mediator functions as a bridge to convey information from gene-specific regulatory proteins to the basal RNA polymerase II transcription machinery. Mediator is recruited to promoters by direct interactions with regulatory proteins and serves as a scaffold for the assembly of a functional pre-initiation complex with RNA polymerase II and the general transcription factors. Phosphorylates the CTD (C-terminal domain) of the large subunit of RNA polymerase II (RNAp II), which may inhibit the formation of a transcription initiation complex. The protein is Cyclin-dependent kinase 8 (cdk8) of Xenopus laevis (African clawed frog).